Here is a 309-residue protein sequence, read N- to C-terminus: HPr kinase/phosphorylase (309 aa).

Catalysis depends on residues H138 and K159. 153–160 contributes to the ATP binding site; that stretch reads GQSGVGKS. S160 is a binding site for Mg(2+). Catalysis depends on D177, which acts as the Proton acceptor; for phosphorylation activity. Proton donor; for dephosphorylation activity. Residues 201–210 are important for the catalytic mechanism of both phosphorylation and dephosphorylation; sequence LEIRGLGIIN. Residue E202 coordinates Mg(2+). R243 is an active-site residue. Residues 264–269 form an important for the catalytic mechanism of dephosphorylation region; it reads PVRPGR.

It belongs to the HPrK/P family. In terms of assembly, homohexamer. Mg(2+) serves as cofactor.

It catalyses the reaction [HPr protein]-L-serine + ATP = [HPr protein]-O-phospho-L-serine + ADP + H(+). The catalysed reaction is [HPr protein]-O-phospho-L-serine + phosphate + H(+) = [HPr protein]-L-serine + diphosphate. Catalyzes the ATP- as well as the pyrophosphate-dependent phosphorylation of a specific serine residue in HPr, a phosphocarrier protein of the phosphoenolpyruvate-dependent sugar phosphotransferase system (PTS). HprK/P also catalyzes the pyrophosphate-producing, inorganic phosphate-dependent dephosphorylation (phosphorolysis) of seryl-phosphorylated HPr (P-Ser-HPr). The two antagonistic activities of HprK/P are regulated by several intracellular metabolites, which change their concentration in response to the absence or presence of rapidly metabolisable carbon sources (glucose, fructose, etc.) in the growth medium. Also phosphorylates/dephosphorylates the HPr-like catabolite repression protein crh on a specific serine residue. Therefore, by controlling the phosphorylation state of HPr and crh, HPrK/P is a sensor enzyme that plays a major role in the regulation of carbon metabolism and sugar transport: it mediates carbon catabolite repression (CCR), and regulates PTS-catalyzed carbohydrate uptake and inducer exclusion. The polypeptide is HPr kinase/phosphorylase (Bacillus cereus (strain AH820)).